Here is a 1543-residue protein sequence, read N- to C-terminus: DNA-directed RNA polymerase subunit beta' (1543 aa).

Zn(2+) is bound by residues C60, C62, C75, and C78. The Mg(2+) site is built by D627, D629, and D631. Residues C1017, C1097, C1104, and C1107 each coordinate Zn(2+). Disordered regions lie at residues 1466-1490 (PADR…APPR) and 1522-1543 (AEEG…EENV).

It belongs to the RNA polymerase beta' chain family. As to quaternary structure, the RNAP catalytic core consists of 2 alpha, 1 beta, 1 beta' and 1 omega subunit. When a sigma factor is associated with the core the holoenzyme is formed, which can initiate transcription. It depends on Mg(2+) as a cofactor. Zn(2+) is required as a cofactor.

The catalysed reaction is RNA(n) + a ribonucleoside 5'-triphosphate = RNA(n+1) + diphosphate. In terms of biological role, DNA-dependent RNA polymerase catalyzes the transcription of DNA into RNA using the four ribonucleoside triphosphates as substrates. This Herpetosiphon aurantiacus (strain ATCC 23779 / DSM 785 / 114-95) protein is DNA-directed RNA polymerase subunit beta'.